A 163-amino-acid polypeptide reads, in one-letter code: Deoxyuridine 5'-triphosphate nucleotidohydrolase (163 aa).

This sequence belongs to the dUTPase family. Mg(2+) serves as cofactor.

It carries out the reaction dUTP + H2O = dUMP + diphosphate + H(+). It participates in pyrimidine metabolism; dUMP biosynthesis; dUMP from dCTP (dUTP route): step 2/2. In terms of biological role, this enzyme is involved in nucleotide metabolism: it produces dUMP, the immediate precursor of thymidine nucleotides and it decreases the intracellular concentration of dUTP so that uracil cannot be incorporated into DNA. This is Deoxyuridine 5'-triphosphate nucleotidohydrolase from Galliformes (FAdV-8).